A 494-amino-acid chain; its full sequence is Alpha-amylase-related protein (494 aa).

Residues 1–20 (MFKFASAVILCVVAASSTLA) form the signal peptide. At Gln-21 the chain carries Pyrrolidone carboxylic acid. Cys-48 and Cys-104 are disulfide-bonded. Ca(2+) contacts are provided by Asn-118, Gln-169, and Asp-178. Cys-157 and Cys-171 are oxidised to a cystine. Arg-206 is a binding site for chloride. The active-site Nucleophile is Asp-208. Position 212 (His-212) interacts with Ca(2+). The Proton donor role is filled by Glu-245. 2 residues coordinate chloride: Asn-308 and Arg-343. Cystine bridges form between Cys-376-Cys-382, Cys-418-Cys-441, and Cys-448-Cys-460.

It belongs to the glycosyl hydrolase 13 family. In terms of assembly, monomer. Requires Ca(2+) as cofactor. Chloride is required as a cofactor.

The protein resides in the secreted. The catalysed reaction is Endohydrolysis of (1-&gt;4)-alpha-D-glucosidic linkages in polysaccharides containing three or more (1-&gt;4)-alpha-linked D-glucose units.. The polypeptide is Alpha-amylase-related protein (Amyrel) (Drosophila varians (Fruit fly)).